We begin with the raw amino-acid sequence, 111 residues long: Disintegrin Eo1 subunit 1 (111 aa).

A signal peptide spans 1–20 (MIQVLLVIICLAVFPYQGSS). A propeptide spanning residues 21–46 (IILESGNVNDFELVYPKKVTVLPTGA) is cleaved from the precursor. One can recognise a Disintegrin domain in the interval 26–111 (GNVNDFELVY…SDCPRNPWKD (86 aa)). Disulfide bonds link C53–C76, C67–C73, C72–C97, and C85–C104. Positions 89-91 (WGD) match the Cell attachment site; atypical (WGD) motif. A propeptide spanning residues 110–111 (KD) is cleaved from the precursor.

It belongs to the disintegrin family. Dimeric disintegrin subfamily. Heterodimer; disulfide-linked. Expressed by the venom gland.

It is found in the secreted. Its function is as follows. Poor inhibitor of platelet aggregation. The disintegrin inhibits the adhesion of cells expressing the RGD-dependent integrin alpha-5/beta-1 (ITGA5/ITGB1) to immobilized fibronectin. Inhibition on alpha-IIb/beta-3 (ITGA2B/ITGB3) is low. The protein is Disintegrin Eo1 subunit 1 of Echis ocellatus (Ocellated saw-scaled viper).